The sequence spans 233 residues: 3-dehydroquinate dehydratase (233 aa).

Residues 39 to 41 (EIR) and Arg-73 each bind 3-dehydroquinate. Residue His-132 is the Proton donor/acceptor of the active site. Catalysis depends on Lys-159, which acts as the Schiff-base intermediate with substrate. Positions 196 and 219 each coordinate 3-dehydroquinate.

Belongs to the type-I 3-dehydroquinase family. Homodimer.

It catalyses the reaction 3-dehydroquinate = 3-dehydroshikimate + H2O. Its pathway is metabolic intermediate biosynthesis; chorismate biosynthesis; chorismate from D-erythrose 4-phosphate and phosphoenolpyruvate: step 3/7. Functionally, involved in the third step of the chorismate pathway, which leads to the biosynthesis of aromatic amino acids. Catalyzes the cis-dehydration of 3-dehydroquinate (DHQ) and introduces the first double bond of the aromatic ring to yield 3-dehydroshikimate. The polypeptide is 3-dehydroquinate dehydratase (Methanococcoides burtonii (strain DSM 6242 / NBRC 107633 / OCM 468 / ACE-M)).